The sequence spans 143 residues: Ribonuclease VapC33 (143 aa).

Residues aspartate 5 and aspartate 108 each contribute to the Mg(2+) site.

Belongs to the PINc/VapC protein family. Requires Mg(2+) as cofactor.

In terms of biological role, toxic component of a type II toxin-antitoxin (TA) system. An RNase. Its toxic effect is neutralized by coexpression with cognate antitoxin VapB33. This chain is Ribonuclease VapC33, found in Mycobacterium tuberculosis (strain CDC 1551 / Oshkosh).